A 549-amino-acid polypeptide reads, in one-letter code: MSLVACECLPSPGLEPEPCSRARSQACVYLEQIRNRVALGVPDMTKRDYLVDAATQIRLALERDVSEDYEAAFNHYQNGVDVLLRGIHVDPNKERREAVKLKITKYLRRAEEIFNCHLQRPLSSGASPSTGFSSLRLRPIRTLGSAVEQLRGCRVVGVIEKVQLVQDSATGGTFVVKSLPRCHMVSRERLTIIPHGVPYMTKLLRYFMSEDSIFLHLEHVQGGTLWSHLLSQAHPRHSGLSSGSTQERMKAQLNPHLNLLTPARLPSGHAPGKDRIALEPPRTSPSLPLAGEAPSIRPQREAEGEPTARTSTSGSSDLPKAPGGHLHLQARRAGQNSDAGPPRGLTWVPEGAGPVLGGCGRGMDQSCLSADGAGRGCGRATWSVREEQVKQWAAETLVALEALHEQGVLCRDLHPGNLLLDQAGHIRLTYFGQWSEVEPQCCGEAVDNLYSAPEVGGISELTEACDWWSFGSLLYELLTGMALSQSHPSGIQAHTQLQLPEWLSRPAASLLTELLQFEPTRRLGMGEGGVSKLKSHPFFSTIQWSKLVG.

The 29-residue stretch at 87–115 (IHVDPNKERREAVKLKITKYLRRAEEIFN) folds into the MIT domain. The Protein kinase domain occupies 145–539 (SAVEQLRGCR…VSKLKSHPFF (395 aa)). Residues 151 to 159 (RGCRVVGVI) and Lys-177 each bind ATP. Residues 260–325 (LTPARLPSGH…SDLPKAPGGH (66 aa)) form a disordered region. The Proton acceptor role is filled by Asp-412.

The protein belongs to the protein kinase superfamily. Ser/Thr protein kinase family. S6 kinase subfamily.

The catalysed reaction is L-seryl-[protein] + ATP = O-phospho-L-seryl-[protein] + ADP + H(+). The enzyme catalyses L-threonyl-[protein] + ATP = O-phospho-L-threonyl-[protein] + ADP + H(+). This chain is Ribosomal protein S6 kinase-like 1 (RPS6KL1), found in Pongo abelii (Sumatran orangutan).